The primary structure comprises 470 residues: Serine/threonine-protein kinase-like protein At1g28390 (470 aa).

One can recognise a Protein kinase domain in the interval 52 to 333 (FSANNFLGKG…LEVVECLKTV (282 aa)). Residues 58–66 (LGKGSHGRV) and Lys-81 each bind ATP. Asp-186 functions as the Proton acceptor in the catalytic mechanism. Residues Thr-221 and Thr-226 each carry the phosphothreonine modification. Tyr-234 is subject to Phosphotyrosine.

Belongs to the protein kinase superfamily. Ser/Thr protein kinase family.

The catalysed reaction is L-seryl-[protein] + ATP = O-phospho-L-seryl-[protein] + ADP + H(+). The enzyme catalyses L-threonyl-[protein] + ATP = O-phospho-L-threonyl-[protein] + ADP + H(+). This chain is Serine/threonine-protein kinase-like protein At1g28390, found in Arabidopsis thaliana (Mouse-ear cress).